We begin with the raw amino-acid sequence, 111 residues long: MEELQYNFKKRRKTHNGISRFQRSALPLTIVYTIWSTFGSPCSGDQRVTLSITSILRKVQDRRESEKKVKGKGREEYRRYYFFLLFYVSFPHIFLGLFFFIDKKILPFQSV.

Residues 81-101 (YFFLLFYVSFPHIFLGLFFFI) traverse the membrane as a helical segment.

It localises to the membrane. This is an uncharacterized protein from Schizosaccharomyces pombe (strain 972 / ATCC 24843) (Fission yeast).